Reading from the N-terminus, the 552-residue chain is Chaperonin GroEL (552 aa).

ATP is bound by residues 30-33 (TLGP), K51, 87-91 (DGTTT), G415, 479-481 (NAA), and D495.

This sequence belongs to the chaperonin (HSP60) family. In terms of assembly, forms a cylinder of 14 subunits composed of two heptameric rings stacked back-to-back. Interacts with the co-chaperonin GroES.

The protein resides in the cytoplasm. It carries out the reaction ATP + H2O + a folded polypeptide = ADP + phosphate + an unfolded polypeptide.. Functionally, together with its co-chaperonin GroES, plays an essential role in assisting protein folding. The GroEL-GroES system forms a nano-cage that allows encapsulation of the non-native substrate proteins and provides a physical environment optimized to promote and accelerate protein folding. In Stutzerimonas stutzeri (Pseudomonas stutzeri), this protein is Chaperonin GroEL.